Reading from the N-terminus, the 382-residue chain is Alkanesulfonate monooxygenase (382 aa).

This sequence belongs to the SsuD family.

The catalysed reaction is an alkanesulfonate + FMNH2 + O2 = an aldehyde + FMN + sulfite + H2O + 2 H(+). Functionally, catalyzes the desulfonation of aliphatic sulfonates. The chain is Alkanesulfonate monooxygenase from Pseudomonas entomophila (strain L48).